We begin with the raw amino-acid sequence, 147 residues long: Ribonuclease H (147 aa).

The 143-residue stretch at 3–145 (TEDRVEIYTD…ADQLANKGVE (143 aa)) folds into the RNase H type-1 domain. Aspartate 12, glutamate 50, aspartate 72, and aspartate 137 together coordinate Mg(2+).

It belongs to the RNase H family. As to quaternary structure, monomer. Mg(2+) is required as a cofactor.

It localises to the cytoplasm. The catalysed reaction is Endonucleolytic cleavage to 5'-phosphomonoester.. Its function is as follows. Endonuclease that specifically degrades the RNA of RNA-DNA hybrids. The sequence is that of Ribonuclease H from Chromobacterium violaceum (strain ATCC 12472 / DSM 30191 / JCM 1249 / CCUG 213 / NBRC 12614 / NCIMB 9131 / NCTC 9757 / MK).